The following is a 565-amino-acid chain: MLIADDLEKLLEILPHFVREPLKQHSNRKNLIEVVMDLGRRPEARFPGNPEYLSQRSISWQDLDYCVKKVGNFSGDNRAGIEKTLHRISSMRNREGSIIGLTCRVGRAVFGTISIIRDLLEQGDSILLLGKPGVGKTTAVREIARVLSDEMEKRVVIIDTSNEIAGDGDIPHPAIGRARRMQVAQPDLQHQVMIEAVENHMPEVIIIDEIGTELEALAARTIAERGVQLVGTAHGNYLESLIKNPTLADLIGGIQYVTLGDDEAKRRGTQKSILERKAAPAFQIAIEIHDRKAWIVHEKVEETIDQILQGHQPFVQKRQIQDNGRILIKCYPSQSTEVLSTNSSSLQKMSSLKQKTHFLQQREVKNKTFDLNKLENRDTSLLSTTINTPVNINNHSFQVEASIQYLYAYSLSWQHITSVISALDLPIILTKEIEKSDAILALRSQVKQNTKLRQIAKSRQIIIYTIQNSTVPQITRALRKILNINTSSDLNWVKLCKSKKFYEIQALQEAKLAIEIIILNENSIVQLTPRSAYIRKMQHNLIDNYQLRARSFGEEPYRKLRIYPE.

130–137 is an ATP binding site; sequence GKPGVGKT. In terms of domain architecture, R3H spans 503–565; the sequence is EIQALQEAKL…PYRKLRIYPE (63 aa).

The protein belongs to the ycf45 family.

The protein localises to the plastid. The protein resides in the chloroplast. This is an uncharacterized protein from Porphyra purpurea (Red seaweed).